A 418-amino-acid chain; its full sequence is AP-3 complex subunit mu-2 (418 aa).

The MHD domain occupies 176 to 417 (NNEAYFDVIE…MTKAGKFQVR (242 aa)).

This sequence belongs to the adaptor complexes medium subunit family. As to quaternary structure, AP-3 associates with the BLOC-1 complex. Adaptor protein complex 3 (AP-3) is a heterotetramer composed of two large adaptins (delta-type subunit AP3D1 and beta-type subunit AP3B1 or AP3B2), a medium adaptin (mu-type subunit AP3M1 or AP3M2) and a small adaptin (sigma-type subunit APS1 or AP3S2).

The protein resides in the golgi apparatus. It is found in the cytoplasmic vesicle membrane. Its function is as follows. Part of the AP-3 complex, an adaptor-related complex which is not clathrin-associated. The complex is associated with the Golgi region as well as more peripheral structures. It facilitates the budding of vesicles from the Golgi membrane and may be directly involved in trafficking to lysosomes. In concert with the BLOC-1 complex, AP-3 is required to target cargos into vesicles assembled at cell bodies for delivery into neurites and nerve terminals. This chain is AP-3 complex subunit mu-2 (AP3M2), found in Homo sapiens (Human).